Here is a 131-residue protein sequence, read N- to C-terminus: Two-component response regulator ORR3 (131 aa).

One can recognise a Response regulatory domain in the interval 12–129 (HVLAVDDSIV…DVSRLCNRVI (118 aa)). Position 62 is a 4-aspartylphosphate (Asp62).

Belongs to the ARR family. Type-A subfamily. In terms of processing, two-component system major event consists of a His-to-Asp phosphorelay between a sensor histidine kinase (HK) and a response regulator (RR). In plants, the His-to-Asp phosphorelay involves an additional intermediate named Histidine-containing phosphotransfer protein (HPt). This multistep phosphorelay consists of a His-Asp-His-Asp sequential transfer of a phosphate group between first a His and an Asp of the HK protein, followed by the transfer to a conserved His of the HPt protein and finally the transfer to an Asp in the receiver domain of the RR protein. Expressed in roots, mature leaves and flowers, and at low levels in shoots.

Functionally, functions as a response regulator involved in His-to-Asp phosphorelay signal transduction system. Phosphorylation of the Asp residue in the receiver domain activates the ability of the protein to promote the transcription of target genes. Type-A response regulators seem to act as negative regulators of the cytokinin signaling. The sequence is that of Two-component response regulator ORR3 from Oryza sativa subsp. indica (Rice).